The sequence spans 324 residues: MELLPHEKQVVEYEKTIAEFKEKNKKNSLLSSSEIQKLERRLDKLKEKIYSDLTPWERVQICRHPSRPRSVNYIEGMCEEFVELCGDRTFRDDPAVVGGLAKIQGQRFMLIGQEKGCDTASRVHRNFGMLCPEGFRKALRLAKMAEKFGLPIVFLVDTPGAFPGLTAEERGQGWAIANNLFQLARLKTPIIVLVIGEGCSGGALGMAIGDVIAMLEHSYYSVISPEGCASILWKDPKKNSEAAAMLKMHGEDLKQFAIVDVVIKEPVGGAHHDPAAVYRNVQNFILQEWLRLKDLSIEDLLEKRYQKFRTIGLYETSSESGPEA.

A CoA carboxyltransferase C-terminal domain is found at 37 to 291; it reads KLERRLDKLK…QNFILQEWLR (255 aa).

Belongs to the AccA family. Acetyl-CoA carboxylase is a heterohexamer composed of biotin carboxyl carrier protein (AccB), biotin carboxylase (AccC) and two subunits each of ACCase subunit alpha (AccA) and ACCase subunit beta (AccD).

It localises to the cytoplasm. The catalysed reaction is N(6)-carboxybiotinyl-L-lysyl-[protein] + acetyl-CoA = N(6)-biotinyl-L-lysyl-[protein] + malonyl-CoA. The protein operates within lipid metabolism; malonyl-CoA biosynthesis; malonyl-CoA from acetyl-CoA: step 1/1. In terms of biological role, component of the acetyl coenzyme A carboxylase (ACC) complex. First, biotin carboxylase catalyzes the carboxylation of biotin on its carrier protein (BCCP) and then the CO(2) group is transferred by the carboxyltransferase to acetyl-CoA to form malonyl-CoA. The polypeptide is Acetyl-coenzyme A carboxylase carboxyl transferase subunit alpha (Chlamydia caviae (strain ATCC VR-813 / DSM 19441 / 03DC25 / GPIC) (Chlamydophila caviae)).